Reading from the N-terminus, the 434-residue chain is Putative peptidase B (434 aa).

Mn(2+) is bound by residues lysine 198 and aspartate 203. The active site involves lysine 210. Mn(2+) contacts are provided by aspartate 221, aspartate 280, and glutamate 282. The active site involves arginine 284.

It belongs to the peptidase M17 family. As to quaternary structure, homohexamer. Mn(2+) serves as cofactor.

It localises to the cytoplasm. It catalyses the reaction Release of an N-terminal amino acid, Xaa, from a peptide or arylamide. Xaa is preferably Glu or Asp but may be other amino acids, including Leu, Met, His, Cys and Gln.. Functionally, probably plays an important role in intracellular peptide degradation. This Haemophilus influenzae (strain ATCC 51907 / DSM 11121 / KW20 / Rd) protein is Putative peptidase B.